Here is a 178-residue protein sequence, read N- to C-terminus: Large ribosomal subunit protein uL10 (178 aa).

It belongs to the universal ribosomal protein uL10 family. Part of the ribosomal stalk of the 50S ribosomal subunit. The N-terminus interacts with L11 and the large rRNA to form the base of the stalk. The C-terminus forms an elongated spine to which L12 dimers bind in a sequential fashion forming a multimeric L10(L12)X complex.

In terms of biological role, forms part of the ribosomal stalk, playing a central role in the interaction of the ribosome with GTP-bound translation factors. This chain is Large ribosomal subunit protein uL10, found in Dictyoglomus thermophilum (strain ATCC 35947 / DSM 3960 / H-6-12).